The chain runs to 189 residues: Small ribosomal subunit protein uS4 (189 aa).

The S4 RNA-binding domain maps to 107–181 (RRLQTQVFKL…VKRRTLRKGD (75 aa)). A disordered region spans residues 161 to 189 (QSPYGGGRPGRVKRRTLRKGDGAGGDDEE).

It belongs to the universal ribosomal protein uS4 family. Component of the small ribosomal subunit. Part of the small subunit (SSU) processome, composed of more than 70 proteins and the RNA chaperone small nucleolar RNA (snoRNA) U3.

Its subcellular location is the cytoplasm. It is found in the nucleus. The protein resides in the nucleolus. In terms of biological role, component of the small ribosomal subunit. The ribosome is a large ribonucleoprotein complex responsible for the synthesis of proteins in the cell. Part of the small subunit (SSU) processome, first precursor of the small eukaryotic ribosomal subunit. During the assembly of the SSU processome in the nucleolus, many ribosome biogenesis factors, an RNA chaperone and ribosomal proteins associate with the nascent pre-rRNA and work in concert to generate RNA folding, modifications, rearrangements and cleavage as well as targeted degradation of pre-ribosomal RNA by the RNA exosome. The polypeptide is Small ribosomal subunit protein uS4 (rps-9) (Caenorhabditis elegans).